The chain runs to 239 residues: tRNA (guanine-N(7)-)-methyltransferase (239 aa).

The S-adenosyl-L-methionine site is built by Glu69, Glu94, Asp121, and Asp144. Asp144 is an active-site residue. Lys148 provides a ligand contact to substrate. Residues 150–155 (RHNKRR) are interaction with RNA. Substrate-binding positions include Asp180 and 217-220 (TKFE).

Belongs to the class I-like SAM-binding methyltransferase superfamily. TrmB family. In terms of assembly, monomer.

It catalyses the reaction guanosine(46) in tRNA + S-adenosyl-L-methionine = N(7)-methylguanosine(46) in tRNA + S-adenosyl-L-homocysteine. It participates in tRNA modification; N(7)-methylguanine-tRNA biosynthesis. Catalyzes the formation of N(7)-methylguanine at position 46 (m7G46) in tRNA. The chain is tRNA (guanine-N(7)-)-methyltransferase from Serratia proteamaculans (strain 568).